A 174-amino-acid chain; its full sequence is tRNA (cytidine(56)-2'-O)-methyltransferase (174 aa).

S-adenosyl-L-methionine-binding positions include leucine 83, glycine 108–valine 112, and valine 126–glutamate 133.

Belongs to the aTrm56 family. In terms of assembly, homodimer.

Its subcellular location is the cytoplasm. The enzyme catalyses cytidine(56) in tRNA + S-adenosyl-L-methionine = 2'-O-methylcytidine(56) in tRNA + S-adenosyl-L-homocysteine + H(+). Specifically catalyzes the AdoMet-dependent 2'-O-ribose methylation of cytidine at position 56 in tRNAs. The sequence is that of tRNA (cytidine(56)-2'-O)-methyltransferase from Methanothrix thermoacetophila (strain DSM 6194 / JCM 14653 / NBRC 101360 / PT) (Methanosaeta thermophila).